Reading from the N-terminus, the 360-residue chain is Phospho-N-acetylmuramoyl-pentapeptide-transferase (360 aa).

10 consecutive transmembrane segments (helical) span residues 26–46 (AILG…WVIN), 70–90 (GTPT…TLLW), 97–117 (YVLA…VDDY), 134–154 (YFWQ…TAQI), 167–187 (GVAL…VVGF), 199–219 (GLAI…AYLV), 236–256 (AGEL…FLWF), 263–283 (VFMG…IAVI), 288–308 (IVFI…ILQV), and 338–358 (VIVR…ATLK).

The protein belongs to the glycosyltransferase 4 family. MraY subfamily. Requires Mg(2+) as cofactor.

It is found in the cell inner membrane. It carries out the reaction UDP-N-acetyl-alpha-D-muramoyl-L-alanyl-gamma-D-glutamyl-meso-2,6-diaminopimeloyl-D-alanyl-D-alanine + di-trans,octa-cis-undecaprenyl phosphate = di-trans,octa-cis-undecaprenyl diphospho-N-acetyl-alpha-D-muramoyl-L-alanyl-D-glutamyl-meso-2,6-diaminopimeloyl-D-alanyl-D-alanine + UMP. Its pathway is cell wall biogenesis; peptidoglycan biosynthesis. Catalyzes the initial step of the lipid cycle reactions in the biosynthesis of the cell wall peptidoglycan: transfers peptidoglycan precursor phospho-MurNAc-pentapeptide from UDP-MurNAc-pentapeptide onto the lipid carrier undecaprenyl phosphate, yielding undecaprenyl-pyrophosphoryl-MurNAc-pentapeptide, known as lipid I. This Saccharophagus degradans (strain 2-40 / ATCC 43961 / DSM 17024) protein is Phospho-N-acetylmuramoyl-pentapeptide-transferase.